A 149-amino-acid polypeptide reads, in one-letter code: Large-conductance mechanosensitive channel (149 aa).

2 consecutive transmembrane segments (helical) span residues 14–34 (VVDMAVGIIVGGAFGKLVNTL) and 85–105 (GLFINAMISFIIMAFAVYLLV).

It belongs to the MscL family. As to quaternary structure, homopentamer.

It is found in the cell inner membrane. Channel that opens in response to stretch forces in the membrane lipid bilayer. May participate in the regulation of osmotic pressure changes within the cell. The polypeptide is Large-conductance mechanosensitive channel (Chlorobium phaeovibrioides (strain DSM 265 / 1930) (Prosthecochloris vibrioformis (strain DSM 265))).